A 78-amino-acid chain; its full sequence is UPF0291 protein Ldb1355 (78 aa).

It belongs to the UPF0291 family.

The protein resides in the cytoplasm. The protein is UPF0291 protein Ldb1355 of Lactobacillus delbrueckii subsp. bulgaricus (strain ATCC 11842 / DSM 20081 / BCRC 10696 / JCM 1002 / NBRC 13953 / NCIMB 11778 / NCTC 12712 / WDCM 00102 / Lb 14).